Here is a 98-residue protein sequence, read N- to C-terminus: MPRSLKKGPFIDIKLEKRILDMNSRSEKKVLKTWSRSTMISPDFVGHTIAVHNGKTHVPVYVSDNMVGHKLGEFAPTRTFRGHAGGKAEKGGSAPKRK.

The disordered stretch occupies residues 77 to 98; the sequence is TRTFRGHAGGKAEKGGSAPKRK.

This sequence belongs to the universal ribosomal protein uS19 family.

Protein S19 forms a complex with S13 that binds strongly to the 16S ribosomal RNA. In Chlorobium luteolum (strain DSM 273 / BCRC 81028 / 2530) (Pelodictyon luteolum), this protein is Small ribosomal subunit protein uS19.